We begin with the raw amino-acid sequence, 733 residues long: MGFSSGKSTKKKPLLFDIRLKNVDNDVILLKGPPNEAPSVLLSGCIVLSINEPMQIKSISLRLYGKIQIDVPLERPQDASSSSLSSSPPKIRKYNKVFYNYAWDNVNLKEYLSGLRGQSGLAGSSSSSNILGTRQRAQSTSSLKSLKGSSSPSSCTLDKGNYDFPFSAILPGSLPESVESLPNCFVTYSMESVIERSKNYSDLICRKNIRVLRTISPAAVELSETVCVDNSWPDKVDYSISVPNKAVAIGSATPINISIVPLSKGLKLGSIKVVLFENYQYCDPFPPVISENRQVTELNLEDPLNESSGEFNGNGCFVNNPFFQPDHSFQDKWEIDTILQIPNSLSNCVQDCDVRSNIKVRHKLKFFIILINPDGHKSELRASLPIQLFISPFVALSIKPLSSSNLYSLFSTTNQKDENSSQEEEEEYLFSRSASVTGLELLADMRSGGSVPTISDLMTPPNYEMHVYDRLYSGSFTRTAVETSGTCTPLGSECSTVEDQQQDLEDLRIRLTKIRNQRDNLGLPPSASSAAASRSLSPLLNVPAPEDGTERILPQSALGPNSGSVPGVHSNVSPVLLSRSPAPSVSAHEVLPVPSGLNYPETQNLNKVPSYGKAMKYDIIGEDLPPSYPCAIQNVQPRKPSRVHSRNSSTTLSSSIPTSFHSSSFMSSTASPISIINGSRSSSSGVSLNTLNELTSKTSNNPSSNSMKRSPTRRRATSLAGFMGGFLSKGNKR.

The short motif at 460-463 is the PY-motif element; that stretch reads PPNY. Residues 518–566 are disordered; it reads RDNLGLPPSASSAAASRSLSPLLNVPAPEDGTERILPQSALGPNSGSVP. Residues 523-540 are compositionally biased toward low complexity; that stretch reads LPPSASSAAASRSLSPLL. The PY-motif motif lies at 625–628; the sequence is PPSY. Disordered stretches follow at residues 636 to 658 and 693 to 733; these read QPRK…SIPT and ELTS…GNKR. Positions 646 to 658 are enriched in low complexity; that stretch reads RNSSTTLSSSIPT.

It belongs to the arrestin family. Interacts with RSP5 via its 2 PY-motifs.

In terms of biological role, involved in resistance to GST substrate o-dinitrobenzene (o-DNB). The protein is Protein ROG3 (ROG3) of Saccharomyces cerevisiae (strain ATCC 204508 / S288c) (Baker's yeast).